We begin with the raw amino-acid sequence, 282 residues long: Deoxyribonuclease-1 (282 aa).

The first 20 residues, 1–20, serve as a signal peptide directing secretion; the sequence is MARLVLELLAAALLLRVAAT. An N-linked (GlcNAc...) asparagine glycan is attached at asparagine 38. Glutamate 98 is a catalytic residue. Cysteine 121 and cysteine 124 are oxidised to a cystine. Histidine 154 is a catalytic residue. Residues cysteine 193 and cysteine 229 are joined by a disulfide bond.

This sequence belongs to the DNase I family. It depends on Ca(2+) as a cofactor. Mg(2+) is required as a cofactor. N-glycosylated.

The protein localises to the secreted. It localises to the zymogen granule. It is found in the nucleus envelope. It carries out the reaction Endonucleolytic cleavage to 5'-phosphodinucleotide and 5'-phosphooligonucleotide end-products.. Functionally, serum endocuclease secreted into body fluids by a wide variety of exocrine and endocrine organs. Expressed by non-hematopoietic tissues and preferentially cleaves protein-free DNA. Among other functions, seems to be involved in cell death by apoptosis. Binds specifically to G-actin and blocks actin polymerization. This Gallus gallus (Chicken) protein is Deoxyribonuclease-1 (DNASE1).